A 615-amino-acid chain; its full sequence is Zinc finger protein 181 (615 aa).

The 73-residue stretch at 48–120 folds into the KRAB domain; sequence VTFSDVAIDF…EKKLSKGLIP (73 aa). Residues Lys153 and Lys170 each participate in a glycyl lysine isopeptide (Lys-Gly) (interchain with G-Cter in SUMO2) cross-link. 11 C2H2-type zinc fingers span residues 281–303, 309–331, 337–359, 365–387, 393–415, 421–443, 449–471, 477–499, 505–527, 533–555, and 561–583; these read YTCSECGKAFGKQSILNRHWRIH, YECRECGKTFSHGSSLTRHLISH, YKCIECGKAFSHVSSLTNHQSTH, YECMNCGKSFSRVSHLIEHLRIH, YECRICGKAFIHRSSLIHHQKIH, YECRECGKAFCCSSHLTRHQRIH, YECNKCLKVFSSLSFLVQHQSIH, FECQKCRKSFNQLESLNMHLRNH, YECSICGKAFSHRSSLLQHHRIH, YECIKCGKTFSCSSNLTVHQRIH, and YKCNECGKAFSKGSNLTAHQRVH.

Belongs to the krueppel C2H2-type zinc-finger protein family.

The protein localises to the nucleus. In terms of biological role, may be involved in transcriptional regulation. This Pongo abelii (Sumatran orangutan) protein is Zinc finger protein 181 (ZNF181).